Consider the following 530-residue polypeptide: TNF receptor-associated factor family protein DDB_G0272829 (530 aa).

Residues 35–81 form an RING-type; degenerate zinc finger; the sequence is CQICEGLLISSLIPNRMKALQCINGHCFCLTCWESILEIKSECPTCR. TRAF-type zinc fingers lie at residues 134-188 and 189-246; these read RHES…KQMQ and GHIL…NDND. Disordered regions lie at residues 242 to 267, 391 to 432, and 483 to 530; these read NNDN…LSSS, TTTT…DNQG, and FNQL…GTSL. Composition is skewed to low complexity over residues 253-267, 391-415, and 485-502; these read NNSN…LSSS, TTTT…NNNN, and QLSQ…SQSL. The stretch at 361–422 forms a coiled coil; it reads ILEHQQQQNQ…NNNNEDEEDD (62 aa). Residues 509 to 530 show a composition bias toward polar residues; the sequence is ITINQNQNTPSNPFSIFSGTSL.

Belongs to the TNF receptor-associated factor family.

Its subcellular location is the cytoplasm. In terms of biological role, probable adapter protein and signal transducer that links members of the tumor necrosis factor receptor family to different signaling pathways by association with the receptor cytoplasmic domain and kinases. This is TNF receptor-associated factor family protein DDB_G0272829 from Dictyostelium discoideum (Social amoeba).